A 231-amino-acid polypeptide reads, in one-letter code: Uracil-DNA glycosylase (231 aa).

The Proton acceptor role is filled by Asp-74.

Belongs to the uracil-DNA glycosylase (UDG) superfamily. UNG family.

It localises to the cytoplasm. It carries out the reaction Hydrolyzes single-stranded DNA or mismatched double-stranded DNA and polynucleotides, releasing free uracil.. Excises uracil residues from the DNA which can arise as a result of misincorporation of dUMP residues by DNA polymerase or due to deamination of cytosine. The polypeptide is Uracil-DNA glycosylase (Campylobacter jejuni subsp. jejuni serotype O:6 (strain 81116 / NCTC 11828)).